The chain runs to 503 residues: ATP synthase subunit alpha (503 aa).

169–176 provides a ligand contact to ATP; sequence GDRQTGKT.

The protein belongs to the ATPase alpha/beta chains family. F-type ATPases have 2 components, CF(1) - the catalytic core - and CF(0) - the membrane proton channel. CF(1) has five subunits: alpha(3), beta(3), gamma(1), delta(1), epsilon(1). CF(0) has three main subunits: a(1), b(2) and c(9-12). The alpha and beta chains form an alternating ring which encloses part of the gamma chain. CF(1) is attached to CF(0) by a central stalk formed by the gamma and epsilon chains, while a peripheral stalk is formed by the delta and b chains.

It localises to the cell membrane. It carries out the reaction ATP + H2O + 4 H(+)(in) = ADP + phosphate + 5 H(+)(out). In terms of biological role, produces ATP from ADP in the presence of a proton gradient across the membrane. The alpha chain is a regulatory subunit. In Staphylococcus epidermidis (strain ATCC 35984 / DSM 28319 / BCRC 17069 / CCUG 31568 / BM 3577 / RP62A), this protein is ATP synthase subunit alpha.